The primary structure comprises 801 residues: MRVQSLLRAQSLATSSLRCSARSVARAPSRCALSTIAASRTPYTNGSKTDTWIEGQKIQNQRRWQTTAAKVLEQAKDDPSTLTQEKIVENLDPVEWERLSRVRNIGIAAHIDSGKTTATERVLFYTGRINAIHEVRGKDAVGAKMDSMDLEREKGITIQSAATFCDWVKKNDEGKEEKYHINLIDTPGHIDFTIEVERALRVLDGAVMILCAVSGVQSQTITVDRQMRRYNIPRISFVNKMDRMGANPWKAVEQINQKLRIPAAALQVPIGREDGFLGVVDLVRMKAIYNEGPKGEIIRETDEIPADIVELCKEKRQELIEKLADVDDEIAEIFLDEKEPTIAQIKAAIRRATISLKFTPVMMGSALADKSVQPMLDAVCDYLPNPSEVENMALDKKRAEAPVKLVSYNSLPFVGLAFKLEESSFGQLTYIRVYQGTLRKGMNVFNARSDKKIRIPKIVRMHSNDMEEIPEIGAGEICAVFGVDCASGDTFTDGNLAYTMTSMFVPEPVISLSIKPKHTKDTPNFSKAMSRFTREDPTFRVHTDAESQETIISGMGELHLDIYVERMRREYRVECETGQPQVAYRETMTQRVNFDHTLKKQSGGSGDYARVVGWMEPAESLGENKFEQQISGGTISEKFLFACEKGFMASTAKGPLLGHRVLGTSMVINDGATHAVDSSEMAFKNATQQAFRKAFKAGAPQVLEPLMKTTITAPNEFQGSVVGLLNKRNAVINDTEIGPEDFTVYADCSLNSMFGFSSQLRASTQGKGEFSMEFSHYSPAPPQLQRELVAKYEKEQAAKNA.

A mitochondrion-targeting transit peptide spans 1–65; it reads MRVQSLLRAQ…QKIQNQRRWQ (65 aa). The tr-type G domain maps to 100–387; that stretch reads SRVRNIGIAA…AVCDYLPNPS (288 aa). Residues 109–116, 185–189, and 239–242 contribute to the GTP site; these read AHIDSGKT, DTPGH, and NKMD.

It belongs to the TRAFAC class translation factor GTPase superfamily. Classic translation factor GTPase family. EF-G/EF-2 subfamily.

The protein localises to the mitochondrion. The protein operates within protein biosynthesis; polypeptide chain elongation. In terms of biological role, mitochondrial GTPase that catalyzes the GTP-dependent ribosomal translocation step during translation elongation. During this step, the ribosome changes from the pre-translocational (PRE) to the post-translocational (POST) state as the newly formed A-site-bound peptidyl-tRNA and P-site-bound deacylated tRNA move to the P and E sites, respectively. Catalyzes the coordinated movement of the two tRNA molecules, the mRNA and conformational changes in the ribosome. The sequence is that of Elongation factor G, mitochondrial (mef1) from Pyrenophora tritici-repentis (strain Pt-1C-BFP) (Wheat tan spot fungus).